Consider the following 471-residue polypeptide: Exoglucanase 2 (471 aa).

The first 18 residues, 1 to 18 (MIVGILTTLATLATLAAS), serve as a signal peptide directing secretion. Positions 19–24 (VPLEER) are excised as a propeptide. Gln-25 is subject to Pyrrolidone carboxylic acid. Residues 26 to 62 (ACSSVWGQCGGQNWSGPTCCASGSTCVYSNDYYSQCL) form the CBM1 domain. Residues 64-101 (GAASSSSSTRAASTTSRVSPTTSRSSSATPPPGSTTTR) are compositionally biased toward low complexity. The disordered stretch occupies residues 64–108 (GAASSSSSTRAASTTSRVSPTTSRSSSATPPPGSTTTRVPPVGSG). Residues 66-106 (ASSSSSTRAASTTSRVSPTTSRSSSATPPPGSTTTRVPPVG) are linker. The catalytic stretch occupies residues 107-471 (SGTATYSGNP…LLTNANPSFL (365 aa)). Thr-111 and Thr-121 each carry an O-linked (Man...) threonine glycan. 4 O-linked (Man...) serine glycosylation sites follow: Ser-130, Ser-133, Ser-134, and Ser-139. Thr-146 is a glycosylation site (O-linked (Man...) threonine). The cysteines at positions 200 and 259 are disulfide-linked. The Proton donor role is filled by Asp-245. The N-linked (GlcNAc) asparagine glycan is linked to Asn-313. A glycan (N-linked (GlcNAc...) (high mannose) asparagine) is linked at Asn-334. A disulfide bridge connects residues Cys-392 and Cys-439.

Belongs to the glycosyl hydrolase 6 (cellulase B) family. In terms of processing, asn-334 contains mainly a high-mannose-type glycan (Hex(7-9)GlcNAc(2)) in a 3:1 ration with a single GlcNAc. Asn-313 was primarily unglycosylated with a small fraction (18%) bearing a single GlcNAc at this site.

The protein resides in the secreted. It catalyses the reaction Hydrolysis of (1-&gt;4)-beta-D-glucosidic linkages in cellulose and cellotetraose, releasing cellobiose from the non-reducing ends of the chains.. Functionally, exocellobiohydrolases (CBH) that catalyzes the hydrolysis of 1,4-beta-D-glucosidic bonds in cellulose to release the disaccharide cellobiose. The degradation of cellulose involves an interplay between different cellulolytic enzymes. Hydrolysis starts with endoglucanases (EGs), which cut internal beta-1,4-glucosidic bonds in cellulose to reduce the polymerization degree of the substrate and create new chain ends for exocellobiohydrolases (CBHs). The CBHs release the disaccharide cellobiose from the non-reducing end of the cellulose polymer chain. Finally, beta-1,4-glucosidases hydrolyze the cellobiose and other short cello-oligosaccharides into glucose units. This Hypocrea jecorina (Trichoderma reesei) protein is Exoglucanase 2 (cbh2).